A 940-amino-acid chain; its full sequence is Glutamate receptor 2.9 (940 aa).

Positions 1–23 are cleaved as a signal peptide; sequence MKTNNTFLSYFVCGFLLMGVGLG. The Extracellular portion of the chain corresponds to 24 to 566; the sequence is QNQTSEIKVG…DTWVFLEPWS (543 aa). N-linked (GlcNAc...) asparagine glycosylation is found at N25, N39, N115, N338, N345, and N528. A helical transmembrane segment spans residues 567–587; that stretch reads LELWVTTGCFFVFIGFVVWLF. Residues 588–596 lie on the Cytoplasmic side of the membrane; it reads EHRVNTDFR. The helical transmembrane segment at 597-617 threads the bilayer; sequence GPPQYQIGTSLWFSFSTMVFA. The Cytoplasmic portion of the chain corresponds to 618–628; that stretch reads HRENVVSNLAR. Residues 629-649 form a helical membrane-spanning segment; sequence FVVVVWCFVVLVLTQSYTASL. The Extracellular portion of the chain corresponds to 650 to 811; sequence TSFLTVQSLQ…NRLNLSSFLG (162 aa). N771, N776, and N805 each carry an N-linked (GlcNAc...) asparagine glycan. The helical transmembrane segment at 812–832 threads the bilayer; sequence LFLIAGTAISFSLLVFVALFL. Over 833–940 the chain is Cytoplasmic; it reads YEHRHTLGDD…ESDIECRVEQ (108 aa). 2 disordered regions span residues 876–900 and 914–940; these read ISSP…QSPS and PSEE…RVEQ.

The protein belongs to the glutamate-gated ion channel (TC 1.A.10.1) family. May form heteromers. As to expression, expressed predominantly in roots.

The protein localises to the membrane. In terms of biological role, glutamate-gated receptor that probably acts as a non-selective cation channel. May be involved in light-signal transduction and calcium homeostasis via the regulation of calcium influx into cells. This is Glutamate receptor 2.9 (GLR2.9) from Arabidopsis thaliana (Mouse-ear cress).